We begin with the raw amino-acid sequence, 88 residues long: Small ribosomal subunit protein bS20 (88 aa).

Disordered stretches follow at residues 1–22 (MPNI…AQNA) and 69–88 (KNAA…GLSA).

Belongs to the bacterial ribosomal protein bS20 family.

Its function is as follows. Binds directly to 16S ribosomal RNA. The sequence is that of Small ribosomal subunit protein bS20 from Shouchella clausii (strain KSM-K16) (Alkalihalobacillus clausii).